Reading from the N-terminus, the 66-residue chain is Disk-determining factor A (66 aa).

Its function is as follows. Involved in cell-shape determination. Required for the formation of disks. The protein is Disk-determining factor A of Haloferax volcanii (strain ATCC 29605 / DSM 3757 / JCM 8879 / NBRC 14742 / NCIMB 2012 / VKM B-1768 / DS2) (Halobacterium volcanii).